The primary structure comprises 424 residues: UDP-N-acetylglucosamine 1-carboxyvinyltransferase 3 (424 aa).

22–23 lines the phosphoenolpyruvate pocket; it reads KN. Arg-94 provides a ligand contact to UDP-N-acetyl-alpha-D-glucosamine. The active-site Proton donor is Asp-118. Residues 123–127, Asp-306, and Leu-328 each bind UDP-N-acetyl-alpha-D-glucosamine; that span reads RPVDQ.

This sequence belongs to the EPSP synthase family. MurA subfamily.

It is found in the cytoplasm. The enzyme catalyses phosphoenolpyruvate + UDP-N-acetyl-alpha-D-glucosamine = UDP-N-acetyl-3-O-(1-carboxyvinyl)-alpha-D-glucosamine + phosphate. It participates in cell wall biogenesis; peptidoglycan biosynthesis. Functionally, cell wall formation. Adds enolpyruvyl to UDP-N-acetylglucosamine. This is UDP-N-acetylglucosamine 1-carboxyvinyltransferase 3 from Symbiobacterium thermophilum (strain DSM 24528 / JCM 14929 / IAM 14863 / T).